The following is a 90-amino-acid chain: RNA-binding protein Hfq (90 aa).

Positions 9 to 69 (DRFLNHLRVN…ISTIIPSSYV (61 aa)) constitute a Sm domain.

It belongs to the Hfq family. As to quaternary structure, homohexamer.

Functionally, RNA chaperone that binds small regulatory RNA (sRNAs) and mRNAs to facilitate mRNA translational regulation in response to envelope stress, environmental stress and changes in metabolite concentrations. Also binds with high specificity to tRNAs. This Thermotoga sp. (strain RQ2) protein is RNA-binding protein Hfq.